Consider the following 362-residue polypeptide: sn-glycerol-3-phosphate import ATP-binding protein UgpC (362 aa).

The ABC transporter domain maps to 4–235 (LSFRNVKKTY…PASTFVAGFI (232 aa)). Residue 37-44 (GPSGCGKS) coordinates ATP.

Belongs to the ABC transporter superfamily. sn-glycerol-3-phosphate importer (TC 3.A.1.1.3) family. In terms of assembly, the complex is composed of two ATP-binding proteins (UgpC), two transmembrane proteins (UgpA and UgpE) and a solute-binding protein (UgpB).

It localises to the cell inner membrane. The enzyme catalyses sn-glycerol 3-phosphate(out) + ATP + H2O = sn-glycerol 3-phosphate(in) + ADP + phosphate + H(+). Its function is as follows. Part of the ABC transporter complex UgpBAEC involved in sn-glycerol-3-phosphate (G3P) import. Responsible for energy coupling to the transport system. This chain is sn-glycerol-3-phosphate import ATP-binding protein UgpC, found in Bordetella bronchiseptica (strain ATCC BAA-588 / NCTC 13252 / RB50) (Alcaligenes bronchisepticus).